The chain runs to 358 residues: Protein FAM50 homolog (358 aa).

The span at 104-113 shows a compositional bias: basic and acidic residues; that stretch reads AKLAEKDRQK. A disordered region spans residues 104 to 151; the sequence is AKLAEKDRQKRQIQALSFDPDDEPDGDDANDGDEGSGKESEKEDVKEE. A compositionally biased stretch (acidic residues) spans 122-137; sequence DPDDEPDGDDANDGDE. Basic and acidic residues predominate over residues 138-151; it reads GSGKESEKEDVKEE.

It belongs to the FAM50 family.

The polypeptide is Protein FAM50 homolog (Anopheles gambiae (African malaria mosquito)).